The following is a 1368-amino-acid chain: DNA-directed RNA polymerase subunit beta (1368 aa).

This sequence belongs to the RNA polymerase beta chain family. In terms of assembly, the RNAP catalytic core consists of 2 alpha, 1 beta, 1 beta' and 1 omega subunit. When a sigma factor is associated with the core the holoenzyme is formed, which can initiate transcription.

The catalysed reaction is RNA(n) + a ribonucleoside 5'-triphosphate = RNA(n+1) + diphosphate. Its function is as follows. DNA-dependent RNA polymerase catalyzes the transcription of DNA into RNA using the four ribonucleoside triphosphates as substrates. The protein is DNA-directed RNA polymerase subunit beta of Syntrophotalea carbinolica (strain DSM 2380 / NBRC 103641 / GraBd1) (Pelobacter carbinolicus).